A 176-amino-acid polypeptide reads, in one-letter code: MKIKNNIALIGFMGAGKSSVSKLLSERLGKTLVSTDACIETREGLSIISIFKEKGEDYFRQMESRVLEDLCRQSGQIIDCGGGIVMRPPNLSLMRLNCLVIYLESRPEDLEARLKNHTNRPLYNAERLDKMLKLLESRLPLYRAAANITISTHNKSCHEVCEEIEDKLREYENTSG.

14 to 19 (GAGKSS) contributes to the ATP binding site. Residue serine 18 participates in Mg(2+) binding. Residues aspartate 36, arginine 60, and glycine 82 each contribute to the substrate site. An ATP-binding site is contributed by arginine 120. Substrate is bound at residue arginine 138.

Belongs to the shikimate kinase family. In terms of assembly, monomer. Mg(2+) serves as cofactor.

It localises to the cytoplasm. The catalysed reaction is shikimate + ATP = 3-phosphoshikimate + ADP + H(+). It participates in metabolic intermediate biosynthesis; chorismate biosynthesis; chorismate from D-erythrose 4-phosphate and phosphoenolpyruvate: step 5/7. Its function is as follows. Catalyzes the specific phosphorylation of the 3-hydroxyl group of shikimic acid using ATP as a cosubstrate. In Dehalococcoides mccartyi (strain ATCC BAA-2266 / KCTC 15142 / 195) (Dehalococcoides ethenogenes (strain 195)), this protein is Shikimate kinase.